Here is a 290-residue protein sequence, read N- to C-terminus: uncharacterized protein (290 aa).

It localises to the cell membrane. The protein localises to the membrane raft. This is an uncharacterized protein from Bacillus subtilis (strain 168).